The sequence spans 497 residues: Protein DETOXIFICATION 25 (497 aa).

The next 12 membrane-spanning stretches (helical) occupy residues 43 to 63 (LPST…QAFI), 70 to 90 (GLAA…GIMA), 121 to 141 (IVDT…GPIL), 157 to 177 (IYPW…MQMY), 186 to 206 (IIGI…WWCV), 216 to 236 (ALLG…VYVF), 261 to 281 (LSIS…IIVL), 291 to 311 (IAIS…NICF), 339 to 359 (VVLV…LAFG), 381 to 401 (IVLS…GVAI), 416 to 436 (SYYA…NFGI), and 438 to 458 (GLWS…CYVI).

Belongs to the multi antimicrobial extrusion (MATE) (TC 2.A.66.1) family.

The protein localises to the membrane. The chain is Protein DETOXIFICATION 25 from Arabidopsis thaliana (Mouse-ear cress).